The sequence spans 120 residues: Small ribosomal subunit protein uS19 (120 aa).

The protein belongs to the universal ribosomal protein uS19 family.

This chain is Small ribosomal subunit protein uS19 (RPS15), found in Naegleria gruberi (Amoeba).